Reading from the N-terminus, the 276-residue chain is Melibiose/raffinose/stachyose import permease protein MelC (276 aa).

6 helical membrane-spanning segments follow: residues 11–31 (IITLLAAIVACAHFIPFYILL), 74–94 (IITGFSALLLIIFGSLAAYPL), 104–124 (AVFALLISIMIIPPLTSMVPL), 139–159 (IAIFINTAAYMPLTVFLYSGF), 186–206 (IVFPLLKPITATICIISCVFI), and 240–260 (LHLVAAAALMAMLPMVVLFLA). The region spanning 69–261 (FINTMIITGF…LPMVVLFLAL (193 aa)) is the ABC transmembrane type-1 domain.

It belongs to the binding-protein-dependent transport system permease family. In terms of assembly, the complex is composed of two ATP-binding proteins (MsmX), two transmembrane proteins (MelC and MelD) and a solute-binding protein (MelE).

The protein localises to the cell membrane. Part of the ABC transporter complex MelEDC-MsmX involved in melibiose, raffinose and stachyose import. Probably responsible for the translocation of the substrate across the membrane. The sequence is that of Melibiose/raffinose/stachyose import permease protein MelC from Bacillus subtilis (strain 168).